The following is a 227-amino-acid chain: Cytochrome c oxidase subunit 2 (227 aa).

The Mitochondrial intermembrane segment spans residues M1–S14. The chain crosses the membrane as a helical span at residues P15–M45. Residues L46–Q59 are Mitochondrial matrix-facing. The chain crosses the membrane as a helical span at residues E60–M87. Residues D88–L227 lie on the Mitochondrial intermembrane side of the membrane. Residues H161, C196, E198, C200, H204, and M207 each coordinate Cu cation. E198 is a Mg(2+) binding site.

It belongs to the cytochrome c oxidase subunit 2 family. Component of the cytochrome c oxidase (complex IV, CIV), a multisubunit enzyme composed of 14 subunits. The complex is composed of a catalytic core of 3 subunits MT-CO1, MT-CO2 and MT-CO3, encoded in the mitochondrial DNA, and 11 supernumerary subunits COX4I, COX5A, COX5B, COX6A, COX6B, COX6C, COX7A, COX7B, COX7C, COX8 and NDUFA4, which are encoded in the nuclear genome. The complex exists as a monomer or a dimer and forms supercomplexes (SCs) in the inner mitochondrial membrane with NADH-ubiquinone oxidoreductase (complex I, CI) and ubiquinol-cytochrome c oxidoreductase (cytochrome b-c1 complex, complex III, CIII), resulting in different assemblies (supercomplex SCI(1)III(2)IV(1) and megacomplex MCI(2)III(2)IV(2)). Found in a complex with TMEM177, COA6, COX18, COX20, SCO1 and SCO2. Interacts with TMEM177 in a COX20-dependent manner. Interacts with COX20. Interacts with COX16. The cofactor is Cu cation.

The protein resides in the mitochondrion inner membrane. The catalysed reaction is 4 Fe(II)-[cytochrome c] + O2 + 8 H(+)(in) = 4 Fe(III)-[cytochrome c] + 2 H2O + 4 H(+)(out). In terms of biological role, component of the cytochrome c oxidase, the last enzyme in the mitochondrial electron transport chain which drives oxidative phosphorylation. The respiratory chain contains 3 multisubunit complexes succinate dehydrogenase (complex II, CII), ubiquinol-cytochrome c oxidoreductase (cytochrome b-c1 complex, complex III, CIII) and cytochrome c oxidase (complex IV, CIV), that cooperate to transfer electrons derived from NADH and succinate to molecular oxygen, creating an electrochemical gradient over the inner membrane that drives transmembrane transport and the ATP synthase. Cytochrome c oxidase is the component of the respiratory chain that catalyzes the reduction of oxygen to water. Electrons originating from reduced cytochrome c in the intermembrane space (IMS) are transferred via the dinuclear copper A center (CU(A)) of subunit 2 and heme A of subunit 1 to the active site in subunit 1, a binuclear center (BNC) formed by heme A3 and copper B (CU(B)). The BNC reduces molecular oxygen to 2 water molecules using 4 electrons from cytochrome c in the IMS and 4 protons from the mitochondrial matrix. The protein is Cytochrome c oxidase subunit 2 (MT-CO2) of Tragelaphus imberbis (Lesser kudu).